The following is a 329-amino-acid chain: Phenylalanine--tRNA ligase alpha subunit (329 aa).

Residue E254 participates in Mg(2+) binding.

Belongs to the class-II aminoacyl-tRNA synthetase family. Phe-tRNA synthetase alpha subunit type 1 subfamily. In terms of assembly, tetramer of two alpha and two beta subunits. Mg(2+) is required as a cofactor.

It is found in the cytoplasm. The enzyme catalyses tRNA(Phe) + L-phenylalanine + ATP = L-phenylalanyl-tRNA(Phe) + AMP + diphosphate + H(+). This is Phenylalanine--tRNA ligase alpha subunit from Haemophilus influenzae (strain 86-028NP).